Reading from the N-terminus, the 156-residue chain is Large ribosomal subunit protein uL15 (156 aa).

The interval 14-35 (GSRTHGWGRVGQHRKSGSSGGK) is disordered.

Belongs to the universal ribosomal protein uL15 family. As to quaternary structure, part of the 50S ribosomal subunit.

Its function is as follows. Binds to the 23S rRNA. The protein is Large ribosomal subunit protein uL15 of Pyrobaculum islandicum (strain DSM 4184 / JCM 9189 / GEO3).